A 221-amino-acid chain; its full sequence is Vesicle-associated membrane protein 714 (221 aa).

At Ala2 the chain carries N-acetylalanine. Residues 2-190 (AIVYAVVARG…RRALWMKNAK (189 aa)) lie on the Cytoplasmic side of the membrane. The region spanning 7-112 (VVARGTVVLA…AMNDEFSRVL (106 aa)) is the Longin domain. Residues 127 to 187 (TLNRVRGEVS…KRLRRALWMK (61 aa)) enclose the v-SNARE coiled-coil homology domain. Residues 191-211 (LLVLLTCLIVFLLYIIIASFC) form a helical; Anchor for type IV membrane protein membrane-spanning segment. Residues 212-221 (GGITLPSCRS) lie on the Vesicular side of the membrane.

This sequence belongs to the synaptobrevin family. Highly expressed in leaves, stems and roots. Detected in flowers.

The protein localises to the golgi apparatus membrane. Functionally, involved in the targeting and/or fusion of transport vesicles to their target membrane. In Arabidopsis thaliana (Mouse-ear cress), this protein is Vesicle-associated membrane protein 714.